The primary structure comprises 308 residues: Glutaminase 2 (308 aa).

Residues Ser-66, Asn-117, Glu-161, Asn-168, Tyr-192, Tyr-244, and Val-262 each contribute to the substrate site.

Belongs to the glutaminase family. Homotetramer.

The enzyme catalyses L-glutamine + H2O = L-glutamate + NH4(+). This is Glutaminase 2 from Shigella flexneri.